The following is a 133-amino-acid chain: ATP synthase epsilon chain (133 aa).

Belongs to the ATPase epsilon chain family. F-type ATPases have 2 components, CF(1) - the catalytic core - and CF(0) - the membrane proton channel. CF(1) has five subunits: alpha(3), beta(3), gamma(1), delta(1), epsilon(1). CF(0) has three main subunits: a, b and c.

The protein resides in the cell inner membrane. Its function is as follows. Produces ATP from ADP in the presence of a proton gradient across the membrane. This chain is ATP synthase epsilon chain, found in Maricaulis maris (strain MCS10) (Caulobacter maris).